Consider the following 103-residue polypeptide: Flagellar hook-basal body complex protein FliE (103 aa).

The protein belongs to the FliE family.

The protein resides in the bacterial flagellum basal body. In Yersinia enterocolitica serotype O:8 / biotype 1B (strain NCTC 13174 / 8081), this protein is Flagellar hook-basal body complex protein FliE.